A 405-amino-acid polypeptide reads, in one-letter code: F-box/kelch-repeat protein At2g43445 (405 aa).

An F-box domain is found at 7-53 (NTNSIYIVSELLEEIFLGLPLKSILKFKTVSKQWRSILESNLFVERR). 2 Kelch repeats span residues 146–197 (RDKV…CVNG) and 356–400 (THHD…VVGY).

This chain is F-box/kelch-repeat protein At2g43445, found in Arabidopsis thaliana (Mouse-ear cress).